The primary structure comprises 363 residues: Phosphoserine aminotransferase (363 aa).

L-glutamate is bound at residue arginine 42. The pyridoxal 5'-phosphate site is built by tryptophan 105, threonine 155, aspartate 175, and glutamine 198. N6-(pyridoxal phosphate)lysine is present on lysine 199. 240-241 (NT) provides a ligand contact to pyridoxal 5'-phosphate.

It belongs to the class-V pyridoxal-phosphate-dependent aminotransferase family. SerC subfamily. Homodimer. Requires pyridoxal 5'-phosphate as cofactor.

The protein localises to the cytoplasm. The catalysed reaction is O-phospho-L-serine + 2-oxoglutarate = 3-phosphooxypyruvate + L-glutamate. It catalyses the reaction 4-(phosphooxy)-L-threonine + 2-oxoglutarate = (R)-3-hydroxy-2-oxo-4-phosphooxybutanoate + L-glutamate. Its pathway is amino-acid biosynthesis; L-serine biosynthesis; L-serine from 3-phospho-D-glycerate: step 2/3. It functions in the pathway cofactor biosynthesis; pyridoxine 5'-phosphate biosynthesis; pyridoxine 5'-phosphate from D-erythrose 4-phosphate: step 3/5. Catalyzes the reversible conversion of 3-phosphohydroxypyruvate to phosphoserine and of 3-hydroxy-2-oxo-4-phosphonooxybutanoate to phosphohydroxythreonine. This is Phosphoserine aminotransferase from Herminiimonas arsenicoxydans.